The sequence spans 241 residues: Uracil-DNA glycosylase (241 aa).

Residue aspartate 73 is the Proton acceptor of the active site.

This sequence belongs to the uracil-DNA glycosylase (UDG) superfamily. UNG family.

The protein resides in the cytoplasm. It carries out the reaction Hydrolyzes single-stranded DNA or mismatched double-stranded DNA and polynucleotides, releasing free uracil.. Its function is as follows. Excises uracil residues from the DNA which can arise as a result of misincorporation of dUMP residues by DNA polymerase or due to deamination of cytosine. The polypeptide is Uracil-DNA glycosylase (Agrobacterium fabrum (strain C58 / ATCC 33970) (Agrobacterium tumefaciens (strain C58))).